Here is a 75-residue protein sequence, read N- to C-terminus: DNA-directed RNA polymerase subunit Rpo5 (75 aa).

It belongs to the archaeal Rpo5/eukaryotic RPB5 RNA polymerase subunit family. Part of the RNA polymerase complex.

It localises to the cytoplasm. The enzyme catalyses RNA(n) + a ribonucleoside 5'-triphosphate = RNA(n+1) + diphosphate. In terms of biological role, DNA-dependent RNA polymerase (RNAP) catalyzes the transcription of DNA into RNA using the four ribonucleoside triphosphates as substrates. The chain is DNA-directed RNA polymerase subunit Rpo5 from Halobacterium salinarum (strain ATCC 700922 / JCM 11081 / NRC-1) (Halobacterium halobium).